The following is a 293-amino-acid chain: MRHPDFPSQLAMTSAWHASLRLRFAARAGRTAMVERRHEGPLRVQKPLYPEGEICHGVVLHPPAGVAGGDRLDIDIAVASGAHAVLATPGATKWYKSLGRDAAQHVRIEVAAGGKLDWLPQENIVFDDARARITTDVVVAPGGSAIGWDAVVLGRQASGERWASGALWLDTRVGDPDRALWIEQSHFDGASPLRGAVAGMDGLHILGTLWAIGPGATQELAEALAEHLPYRADLRAGVTCLAGYGTATAQSMLLLRVLGSDMEAVRHLMIDAWTVLRQPMHGVPARPLRLWST.

Belongs to the UreD family. UreD, UreF and UreG form a complex that acts as a GTP-hydrolysis-dependent molecular chaperone, activating the urease apoprotein by helping to assemble the nickel containing metallocenter of UreC. The UreE protein probably delivers the nickel.

It localises to the cytoplasm. Functionally, required for maturation of urease via the functional incorporation of the urease nickel metallocenter. The polypeptide is Urease accessory protein UreD (Cupriavidus metallidurans (strain ATCC 43123 / DSM 2839 / NBRC 102507 / CH34) (Ralstonia metallidurans)).